Consider the following 149-residue polypeptide: 3-dehydroquinate dehydratase 2 (149 aa).

Tyr-24 (proton acceptor) is an active-site residue. Residues Asn-75, His-81, and Asp-88 each coordinate substrate. His-101 (proton donor) is an active-site residue. Residues 102 to 103 and Arg-112 each bind substrate; that span reads LS.

The protein belongs to the type-II 3-dehydroquinase family. Homododecamer.

It catalyses the reaction 3-dehydroquinate = 3-dehydroshikimate + H2O. It functions in the pathway metabolic intermediate biosynthesis; chorismate biosynthesis; chorismate from D-erythrose 4-phosphate and phosphoenolpyruvate: step 3/7. In terms of biological role, catalyzes a trans-dehydration via an enolate intermediate. This Pseudomonas putida (strain ATCC 47054 / DSM 6125 / CFBP 8728 / NCIMB 11950 / KT2440) protein is 3-dehydroquinate dehydratase 2 (aroQ2).